The following is a 613-amino-acid chain: Serine/threonine-protein kinase pkpA (613 aa).

The region spanning 17-269 is the Protein kinase domain; that stretch reads SKLNTVLGKG…AQEILEHRFL (253 aa). Residues 23 to 31 and K50 contribute to the ATP site; that span reads LGKGAYKVV. D140 functions as the Proton acceptor in the catalytic mechanism. Disordered regions lie at residues 424 to 475 and 589 to 613; these read LQPQ…STML and VTQRGLQGTRSGASTPVEEQEQELM. Residues 427–441 are compositionally biased toward pro residues; it reads QPQPQPQPQPQPQPQ. Low complexity predominate over residues 442–475; the sequence is PQFQLQPQLQYLSPQSTTSPGPTSDDNSTNSTML. Residues 592-602 show a composition bias toward polar residues; the sequence is RGLQGTRSGAS.

It belongs to the protein kinase superfamily. Ser/Thr protein kinase family.

It carries out the reaction L-seryl-[protein] + ATP = O-phospho-L-seryl-[protein] + ADP + H(+). The enzyme catalyses L-threonyl-[protein] + ATP = O-phospho-L-threonyl-[protein] + ADP + H(+). Functionally, serine/threonine protein kinase that probably participates as an intermediate in an intracellular system controlling nuclear proliferation. In Phycomyces blakesleeanus (strain ATCC 8743b / DSM 1359 / FGSC 10004 / NBRC 33097 / NRRL 1555), this protein is Serine/threonine-protein kinase pkpA (pkpA).